We begin with the raw amino-acid sequence, 127 residues long: Small ribosomal subunit protein uS11c (127 aa).

The protein belongs to the universal ribosomal protein uS11 family. Part of the 30S ribosomal subunit.

The protein resides in the plastid. Its subcellular location is the chloroplast. This is Small ribosomal subunit protein uS11c from Heterosigma akashiwo (strain NIES-293 / 8280G21-1).